The following is a 253-amino-acid chain: Methionine aminopeptidase (253 aa).

Histidine 78 contributes to the substrate binding site. A divalent metal cation contacts are provided by aspartate 95, aspartate 106, and histidine 169. Substrate is bound at residue histidine 176. 2 residues coordinate a divalent metal cation: glutamate 206 and glutamate 237.

This sequence belongs to the peptidase M24A family. Methionine aminopeptidase type 1 subfamily. Monomer. Requires Co(2+) as cofactor. The cofactor is Zn(2+). Mn(2+) is required as a cofactor. It depends on Fe(2+) as a cofactor.

It carries out the reaction Release of N-terminal amino acids, preferentially methionine, from peptides and arylamides.. Removes the N-terminal methionine from nascent proteins. The N-terminal methionine is often cleaved when the second residue in the primary sequence is small and uncharged (Met-Ala-, Cys, Gly, Pro, Ser, Thr, or Val). Requires deformylation of the N(alpha)-formylated initiator methionine before it can be hydrolyzed. The sequence is that of Methionine aminopeptidase from Helicobacter pylori (strain J99 / ATCC 700824) (Campylobacter pylori J99).